The chain runs to 161 residues: MALDATFYALVGLILFFVLIAYLKVPGMVGKALDARADKISNELAEAKRLREEAQSLVAEYQRKRKDAEAEAASIVAAAQREAEMLTAEAKQKTEEFVARRTALSEQKIKQAESDAINAVRAAAVDLAISAAEKVIASKADASAQETLFQKALGEVKSRLN.

A helical membrane pass occupies residues 3-23; it reads LDATFYALVGLILFFVLIAYL.

This sequence belongs to the ATPase B chain family. F-type ATPases have 2 components, F(1) - the catalytic core - and F(0) - the membrane proton channel. F(1) has five subunits: alpha(3), beta(3), gamma(1), delta(1), epsilon(1). F(0) has three main subunits: a(1), b(2) and c(10-14). The alpha and beta chains form an alternating ring which encloses part of the gamma chain. F(1) is attached to F(0) by a central stalk formed by the gamma and epsilon chains, while a peripheral stalk is formed by the delta and b chains.

The protein localises to the cell inner membrane. In terms of biological role, f(1)F(0) ATP synthase produces ATP from ADP in the presence of a proton or sodium gradient. F-type ATPases consist of two structural domains, F(1) containing the extramembraneous catalytic core and F(0) containing the membrane proton channel, linked together by a central stalk and a peripheral stalk. During catalysis, ATP synthesis in the catalytic domain of F(1) is coupled via a rotary mechanism of the central stalk subunits to proton translocation. Component of the F(0) channel, it forms part of the peripheral stalk, linking F(1) to F(0). The chain is ATP synthase subunit b 1 from Sinorhizobium medicae (strain WSM419) (Ensifer medicae).